The following is a 61-amino-acid chain: Small ribosomal subunit protein uS14 (61 aa).

Zn(2+) is bound by residues cysteine 24, cysteine 27, cysteine 40, and cysteine 43.

This sequence belongs to the universal ribosomal protein uS14 family. Zinc-binding uS14 subfamily. Part of the 30S ribosomal subunit. Contacts proteins S3 and S10. The cofactor is Zn(2+).

Binds 16S rRNA, required for the assembly of 30S particles and may also be responsible for determining the conformation of the 16S rRNA at the A site. The protein is Small ribosomal subunit protein uS14 of Streptococcus pyogenes serotype M49 (strain NZ131).